The sequence spans 371 residues: Alanine dehydrogenase (371 aa).

Substrate is bound by residues arginine 15 and lysine 74. The active-site Proton donor/acceptor is the histidine 95. Residues serine 133, 177-178, aspartate 197, serine 219, 238-239, 266-269, and 298-301 each bind NAD(+); these read QA, VL, IAID, and VANM. The Proton donor/acceptor role is filled by aspartate 269.

Belongs to the AlaDH/PNT family. Homohexamer. Trimer of dimer.

The catalysed reaction is L-alanine + NAD(+) + H2O = pyruvate + NH4(+) + NADH + H(+). Its pathway is amino-acid degradation; L-alanine degradation via dehydrogenase pathway; NH(3) and pyruvate from L-alanine: step 1/1. In terms of biological role, catalyzes the reversible reductive amination of pyruvate to L-alanine. May play a role in cell wall synthesis as L-alanine is an important constituent of the peptidoglycan layer. The chain is Alanine dehydrogenase (ald) from Staphylococcus epidermidis (strain ATCC 35984 / DSM 28319 / BCRC 17069 / CCUG 31568 / BM 3577 / RP62A).